A 212-amino-acid chain; its full sequence is Adenylate kinase (212 aa).

ATP is bound at residue 10–15; sequence GAGKGT. The interval 30-59 is NMP; the sequence is AIGDIFRTIIKTSTSEAELINNYVRQGELI. Residues arginine 36, 57 to 59, 85 to 88, and glutamine 92 each bind AMP; these read ELI and GYPR. An LID region spans residues 122 to 160; the sequence is GRYSCKNCGKIYNRYFLQPKTDNVCDVCGSSTFDYRKDD. Arginine 123 is a binding site for ATP. Residues cysteine 126 and cysteine 129 each contribute to the Zn(2+) site. 132-133 contributes to the ATP binding site; sequence IY. Cysteine 146 and cysteine 149 together coordinate Zn(2+). AMP-binding residues include arginine 157 and arginine 168. Lysine 196 is a binding site for ATP.

The protein belongs to the adenylate kinase family. As to quaternary structure, monomer.

The protein localises to the cytoplasm. The enzyme catalyses AMP + ATP = 2 ADP. The protein operates within purine metabolism; AMP biosynthesis via salvage pathway; AMP from ADP: step 1/1. Its function is as follows. Catalyzes the reversible transfer of the terminal phosphate group between ATP and AMP. Plays an important role in cellular energy homeostasis and in adenine nucleotide metabolism. The polypeptide is Adenylate kinase (Rickettsia peacockii (strain Rustic)).